Consider the following 287-residue polypeptide: Undecaprenyl-diphosphatase (287 aa).

The next 7 helical transmembrane spans lie at 6–26 (LHLL…FIPV), 45–65 (SGKV…MWIF), 89–109 (NLLL…KSIK), 111–131 (VFYH…IMLW), 204–224 (ATEF…VYDL), 238–258 (AIAV…RAVL), and 266–286 (YRVF…WIYA).

This sequence belongs to the UppP family.

The protein localises to the cell inner membrane. The catalysed reaction is di-trans,octa-cis-undecaprenyl diphosphate + H2O = di-trans,octa-cis-undecaprenyl phosphate + phosphate + H(+). Functionally, catalyzes the dephosphorylation of undecaprenyl diphosphate (UPP). Confers resistance to bacitracin. The sequence is that of Undecaprenyl-diphosphatase from Bordetella bronchiseptica (strain ATCC BAA-588 / NCTC 13252 / RB50) (Alcaligenes bronchisepticus).